Here is a 260-residue protein sequence, read N- to C-terminus: Triosephosphate isomerase (260 aa).

10-12 contributes to the substrate binding site; that stretch reads NWK. The active-site Electrophile is the H100. E172 serves as the catalytic Proton acceptor. Residues G178, S218, and 239–240 contribute to the substrate site; that span reads GG.

Belongs to the triosephosphate isomerase family. As to quaternary structure, homodimer.

The protein resides in the cytoplasm. It carries out the reaction D-glyceraldehyde 3-phosphate = dihydroxyacetone phosphate. It functions in the pathway carbohydrate biosynthesis; gluconeogenesis. It participates in carbohydrate degradation; glycolysis; D-glyceraldehyde 3-phosphate from glycerone phosphate: step 1/1. Functionally, involved in the gluconeogenesis. Catalyzes stereospecifically the conversion of dihydroxyacetone phosphate (DHAP) to D-glyceraldehyde-3-phosphate (G3P). The sequence is that of Triosephosphate isomerase from Corynebacterium diphtheriae (strain ATCC 700971 / NCTC 13129 / Biotype gravis).